A 355-amino-acid polypeptide reads, in one-letter code: Receptor-like serine/threonine-protein kinase At1g78530 (355 aa).

Topologically, residues 1-8 (MANAKETT) are extracellular. The helical transmembrane segment at 9-29 (FYITISVVAFVIGKIVIALLF) threads the bilayer. At 30–355 (YKRWKRKHTI…YIKLSTRSSF (326 aa)) the chain is on the cytoplasmic side. The Protein kinase domain maps to 75-347 (LSNKDILGSG…TEVVKLLEYI (273 aa)). ATP-binding positions include 81–89 (LGSGGFGTV) and Lys-103. Tyr-148 is subject to Phosphotyrosine. Asp-197 serves as the catalytic Proton acceptor. Residues Ser-201 and Ser-230 each carry the phosphoserine modification. Thr-231 and Thr-236 each carry phosphothreonine. Tyr-244 is modified (phosphotyrosine).

Belongs to the protein kinase superfamily. Ser/Thr protein kinase family.

The protein localises to the cell membrane. It carries out the reaction L-seryl-[protein] + ATP = O-phospho-L-seryl-[protein] + ADP + H(+). The catalysed reaction is L-threonyl-[protein] + ATP = O-phospho-L-threonyl-[protein] + ADP + H(+). This Arabidopsis thaliana (Mouse-ear cress) protein is Receptor-like serine/threonine-protein kinase At1g78530.